Reading from the N-terminus, the 537-residue chain is Phosphoenolpyruvate carboxykinase (ATP) (537 aa).

Substrate-binding residues include arginine 61, tyrosine 195, and lysine 201. ATP-binding positions include lysine 201, histidine 220, and 236–244 (GLSGTGKTT). Residues lysine 201 and histidine 220 each coordinate Mn(2+). Aspartate 257 provides a ligand contact to Mn(2+). ATP contacts are provided by glutamate 285, arginine 323, and threonine 448. Arginine 323 is a binding site for substrate.

It belongs to the phosphoenolpyruvate carboxykinase (ATP) family. It depends on Mn(2+) as a cofactor.

Its subcellular location is the cytoplasm. It catalyses the reaction oxaloacetate + ATP = phosphoenolpyruvate + ADP + CO2. Its pathway is carbohydrate biosynthesis; gluconeogenesis. In terms of biological role, involved in the gluconeogenesis. Catalyzes the conversion of oxaloacetate (OAA) to phosphoenolpyruvate (PEP) through direct phosphoryl transfer between the nucleoside triphosphate and OAA. The protein is Phosphoenolpyruvate carboxykinase (ATP) of Rhodopseudomonas palustris (strain HaA2).